A 217-amino-acid chain; its full sequence is Proteasome subunit beta type-9 (217 aa).

The propeptide at 1–18 (MLEESSEPGWLSEEVKTG) is removed in mature form. Thr-19 (nucleophile) is an active-site residue.

The protein belongs to the peptidase T1B family. As to quaternary structure, the 26S proteasome consists of a 20S proteasome core and two 19S regulatory subunits. The 20S proteasome core is composed of 28 subunits that are arranged in four stacked rings, resulting in a barrel-shaped structure. The two end rings are each formed by seven alpha subunits, and the two central rings are each formed by seven beta subunits. The catalytic chamber with the active sites is on the inside of the barrel. Component of the immunoproteasome, where it displaces the equivalent housekeeping subunit PSMB6. Post-translationally, autocleaved. The resulting N-terminal Thr residue of the mature subunit is responsible for the nucleophile proteolytic activity.

The protein localises to the cytoplasm. It localises to the nucleus. The enzyme catalyses Cleavage of peptide bonds with very broad specificity.. Functionally, the proteasome is a multicatalytic proteinase complex which is characterized by its ability to cleave peptides with Arg, Phe, Tyr, Leu, and Glu adjacent to the leaving group at neutral or slightly basic pH. The proteasome has an ATP-dependent proteolytic activity. This subunit is involved in antigen processing to generate class I binding peptides. This Salmo salar (Atlantic salmon) protein is Proteasome subunit beta type-9 (psmb9-a).